The primary structure comprises 413 residues: Corticotropin-releasing factor receptor 2 (413 aa).

The not cleaved signal peptide spans 1–22; that stretch reads MDSTIFEIIIDEFDANCSLLDA. Residues 1 to 110 are Extracellular-facing; that stretch reads MDSTIFEIII…CVPILDNKRK (110 aa). A glycan (N-linked (GlcNAc...) asparagine) is linked at Asn16. 3 disulfide bridges follow: Cys17-Cys53, Cys43-Cys86, and Cys67-Cys101. Residues Asn77, Asn89, and Asn97 are each glycosylated (N-linked (GlcNAc...) asparagine). The chain crosses the membrane as a helical span at residues 111–141; sequence YALHYKIALIINYLGHCISILALVIAFLLFL. Topologically, residues 142 to 148 are cytoplasmic; that stretch reads CLRSIRC. A helical membrane pass occupies residues 149–173; sequence LRNIIHWNLITTFILRNIMWFLLQM. Residues 174–187 are Extracellular-facing; it reads IDHNIHESNEVWCR. Cys186 and Cys256 are disulfide-bonded. A helical transmembrane segment spans residues 188 to 216; the sequence is CITTIYNYFVVTNFFWMFVEGCYLHTAIV. Residues 217 to 223 lie on the Cytoplasmic side of the membrane; it reads MTYSTDK. Residues 224–251 form a helical membrane-spanning segment; the sequence is LRKWVFLFIGWCIPSPIIVTWAICKLFY. The Extracellular segment spans residues 252–267; it reads ENEQCWIGKEPGKYID. The helical transmembrane segment at 268–293 threads the bilayer; sequence YIYQGRVILVLLINFVFLFNIVRILM. Topologically, residues 294-304 are cytoplasmic; it reads TKLRASTTSET. Residues 305–329 form a helical membrane-spanning segment; the sequence is IQYRKAVKATLVLLPLLGITYMLFF. Topologically, residues 330 to 336 are extracellular; it reads VNPGEDD. The chain crosses the membrane as a helical span at residues 337–366; sequence VSQIVFIYFNSFLQSFQGFFVSVFYCFLNG. Residues 367-413 are Cytoplasmic-facing; it reads EVRSAARKRWHRWQDHHSLRVRVARAMSIPTSPTRISFHSIKQTAAV.

It belongs to the G-protein coupled receptor 2 family. An N-glycosylation site within the signal peptide impedes its proper cleavage and function.

The protein resides in the cell membrane. In terms of biological role, G-protein coupled receptor for CRH (corticotropin-releasing factor), UCN (urocortin), UCN2 and UCN3. Has high affinity for UCN. Ligand binding causes a conformation change that triggers signaling via guanine nucleotide-binding proteins (G proteins) and down-stream effectors, such as adenylate cyclase. Promotes the activation of adenylate cyclase, leading to increased intracellular cAMP levels. This Xenopus laevis (African clawed frog) protein is Corticotropin-releasing factor receptor 2 (crhr2).